Reading from the N-terminus, the 336-residue chain is Holliday junction branch migration complex subunit RuvB (336 aa).

Positions 4 to 184 are large ATPase domain (RuvB-L); the sequence is ADRLIQPQVI…FGIPLRLEFY (181 aa). Residues Arg-24, Gly-65, Lys-68, Thr-69, Thr-70, 131-133, Arg-174, Tyr-184, and Arg-221 each bind ATP; that span reads EDY. Thr-69 is a binding site for Mg(2+). Residues 185–255 form a small ATPAse domain (RuvB-S) region; the sequence is NIKDLSTIVI…VAELALDMLD (71 aa). The head domain (RuvB-H) stretch occupies residues 258 to 336; that stretch reads AEGFDYMDRK…HFNLIQPEAK (79 aa). Residues Arg-294, Arg-313, and Arg-318 each coordinate DNA.

It belongs to the RuvB family. Homohexamer. Forms an RuvA(8)-RuvB(12)-Holliday junction (HJ) complex. HJ DNA is sandwiched between 2 RuvA tetramers; dsDNA enters through RuvA and exits via RuvB. An RuvB hexamer assembles on each DNA strand where it exits the tetramer. Each RuvB hexamer is contacted by two RuvA subunits (via domain III) on 2 adjacent RuvB subunits; this complex drives branch migration. In the full resolvosome a probable DNA-RuvA(4)-RuvB(12)-RuvC(2) complex forms which resolves the HJ.

The protein resides in the cytoplasm. It carries out the reaction ATP + H2O = ADP + phosphate + H(+). In terms of biological role, the RuvA-RuvB-RuvC complex processes Holliday junction (HJ) DNA during genetic recombination and DNA repair, while the RuvA-RuvB complex plays an important role in the rescue of blocked DNA replication forks via replication fork reversal (RFR). RuvA specifically binds to HJ cruciform DNA, conferring on it an open structure. The RuvB hexamer acts as an ATP-dependent pump, pulling dsDNA into and through the RuvAB complex. RuvB forms 2 homohexamers on either side of HJ DNA bound by 1 or 2 RuvA tetramers; 4 subunits per hexamer contact DNA at a time. Coordinated motions by a converter formed by DNA-disengaged RuvB subunits stimulates ATP hydrolysis and nucleotide exchange. Immobilization of the converter enables RuvB to convert the ATP-contained energy into a lever motion, pulling 2 nucleotides of DNA out of the RuvA tetramer per ATP hydrolyzed, thus driving DNA branch migration. The RuvB motors rotate together with the DNA substrate, which together with the progressing nucleotide cycle form the mechanistic basis for DNA recombination by continuous HJ branch migration. Branch migration allows RuvC to scan DNA until it finds its consensus sequence, where it cleaves and resolves cruciform DNA. This Shewanella piezotolerans (strain WP3 / JCM 13877) protein is Holliday junction branch migration complex subunit RuvB.